Here is a 663-residue protein sequence, read N- to C-terminus: Spore germination protein GerIA (663 aa).

Residues 1–13 are compositionally biased toward basic residues; the sequence is MIWNWLRKKKKSN. The tract at residues 1–175 is disordered; sequence MIWNWLRKKK…SGGNSIYDFT (175 aa). Over residues 47–56 the composition is skewed to basic and acidic residues; the sequence is KNNEQKDSSQ. Low complexity-rich tracts occupy residues 57-72, 88-101, and 122-150; these read DKQQ…QDKQ and PKQG…QQSA. A run of 5 helical transmembrane segments spans residues 414-434, 451-471, 491-511, 541-561, and 578-598; these read IFVD…DFFI, ILRL…VAVL, AQVP…IDLL, AGLT…ASFI, and FLAF…IFLF.

The protein belongs to the GerABKA family.

The protein resides in the cell membrane. Required for inosine germination. In Bacillus cereus, this protein is Spore germination protein GerIA (gerIA).